Reading from the N-terminus, the 163-residue chain is NADH-quinone oxidoreductase subunit I (163 aa).

2 consecutive 4Fe-4S ferredoxin-type domains span residues 54–84 (LRRY…IESD) and 94–123 (TRYD…ETHI). The [4Fe-4S] cluster site is built by Cys-64, Cys-67, Cys-70, Cys-74, Cys-103, Cys-106, Cys-109, and Cys-113.

This sequence belongs to the complex I 23 kDa subunit family. As to quaternary structure, NDH-1 is composed of 14 different subunits. Subunits NuoA, H, J, K, L, M, N constitute the membrane sector of the complex. [4Fe-4S] cluster serves as cofactor.

The protein resides in the cell inner membrane. The catalysed reaction is a quinone + NADH + 5 H(+)(in) = a quinol + NAD(+) + 4 H(+)(out). Its function is as follows. NDH-1 shuttles electrons from NADH, via FMN and iron-sulfur (Fe-S) centers, to quinones in the respiratory chain. The immediate electron acceptor for the enzyme in this species is believed to be ubiquinone. Couples the redox reaction to proton translocation (for every two electrons transferred, four hydrogen ions are translocated across the cytoplasmic membrane), and thus conserves the redox energy in a proton gradient. In Cupriavidus metallidurans (strain ATCC 43123 / DSM 2839 / NBRC 102507 / CH34) (Ralstonia metallidurans), this protein is NADH-quinone oxidoreductase subunit I.